Reading from the N-terminus, the 141-residue chain is Lutropin subunit beta (141 aa).

Positions Met-1–Ala-20 are cleaved as a signal peptide. Intrachain disulfides connect Cys-29-Cys-77, Cys-43-Cys-92, Cys-46-Cys-130, Cys-54-Cys-108, Cys-58-Cys-110, and Cys-113-Cys-120. Asn-33 carries N-linked (GlcNAc...) asparagine glycosylation.

Belongs to the glycoprotein hormones subunit beta family. As to quaternary structure, heterodimer of a common alpha chain and a unique beta chain which confers biological specificity to thyrotropin, lutropin, follitropin and gonadotropin.

Its subcellular location is the secreted. In terms of biological role, promotes spermatogenesis and ovulation by stimulating the testes and ovaries to synthesize steroids. This chain is Lutropin subunit beta (LHB), found in Ailuropoda melanoleuca (Giant panda).